We begin with the raw amino-acid sequence, 398 residues long: MKQLTILGSTGSIGNSTLSVVRANPELFKVTALVAGRNVREMAQQCLEFSPRYAAMSDEHSAKSLRLLLAEQGSDTEVYSGETAACELAALDDVDQVMAAIVGIAGLPSTLAAIRAGKQVLLANKESLITCGKLFMDEVKRSRAQLLPIDSEHNAIFQSLPERIQRQLGYSSLNENGVSRIILTGSGGPFRETPLSQFSDVTPDQACAHPNWSMGRKISVDSATMMNKGLEYIEARWLFNASAEQIEVVLHPQSVIHSMVRYHDGSILAQMGTPDMRTPIAHAMAYPMRVSSGVAPLDFCKVGALTFTTPDYQRYPCLKLAIDACNAGQAATTALNAANEISVMAFLDSKIRFTDIEVINRTVVEGLLLSEPTSVEEVLVIDRKARDVAAQVIAKLNN.

NADPH is bound by residues T10, G11, S12, I13, G36, R37, N38, and N124. K125 contributes to the 1-deoxy-D-xylulose 5-phosphate binding site. E126 contributes to the NADPH binding site. D150 contacts Mn(2+). 1-deoxy-D-xylulose 5-phosphate is bound by residues S151, E152, S186, and H209. E152 is a Mn(2+) binding site. G215 provides a ligand contact to NADPH. Residues S222, N227, K228, and E231 each coordinate 1-deoxy-D-xylulose 5-phosphate. Residue E231 coordinates Mn(2+).

Belongs to the DXR family. In terms of assembly, homodimer. The cofactor is Mg(2+). Mn(2+) serves as cofactor.

It catalyses the reaction 2-C-methyl-D-erythritol 4-phosphate + NADP(+) = 1-deoxy-D-xylulose 5-phosphate + NADPH + H(+). It functions in the pathway isoprenoid biosynthesis; isopentenyl diphosphate biosynthesis via DXP pathway; isopentenyl diphosphate from 1-deoxy-D-xylulose 5-phosphate: step 1/6. Its function is as follows. Catalyzes the NADPH-dependent rearrangement and reduction of 1-deoxy-D-xylulose-5-phosphate (DXP) to 2-C-methyl-D-erythritol 4-phosphate (MEP). The polypeptide is 1-deoxy-D-xylulose 5-phosphate reductoisomerase (Yersinia pseudotuberculosis serotype O:1b (strain IP 31758)).